We begin with the raw amino-acid sequence, 135 residues long: Ribonuclease VapC9 (135 aa).

The PINc domain occupies 15–118 (VVDTNVLMYV…LKRKAKQRGI (104 aa)). Mg(2+) contacts are provided by Asp-17 and Asp-88.

The protein belongs to the PINc/VapC protein family. In terms of assembly, dimer. The cofactor is Mg(2+).

Toxic component of a type II toxin-antitoxin (TA) system. An RNase. The polypeptide is Ribonuclease VapC9 (Archaeoglobus fulgidus (strain ATCC 49558 / DSM 4304 / JCM 9628 / NBRC 100126 / VC-16)).